A 272-amino-acid polypeptide reads, in one-letter code: AA9 family lytic polysaccharide monooxygenase G (272 aa).

Positions 1–22 are cleaved as a signal peptide; it reads MKGAGSASFLLTLLSTITRTSA. His23 contributes to the Cu(2+) binding site. A glycan (N-linked (GlcNAc...) asparagine) is linked at Asn60. 2 disulfide bridges follow: Cys78-Cys202 and Cys121-Cys125. His110 contacts Cu(2+). Residues His188 and Gln197 each coordinate O2. Tyr199 contacts Cu(2+).

Belongs to the polysaccharide monooxygenase AA9 family. It depends on Cu(2+) as a cofactor.

Its subcellular location is the secreted. It catalyses the reaction [(1-&gt;4)-beta-D-glucosyl]n+m + reduced acceptor + O2 = 4-dehydro-beta-D-glucosyl-[(1-&gt;4)-beta-D-glucosyl]n-1 + [(1-&gt;4)-beta-D-glucosyl]m + acceptor + H2O.. In terms of biological role, lytic polysaccharide monooxygenase (LPMO) that depolymerizes crystalline and amorphous polysaccharides via the oxidation of scissile alpha- or beta-(1-4)-glycosidic bonds, yielding C1 or C4 oxidation products. Catalysis by LPMOs requires the reduction of the active-site copper from Cu(II) to Cu(I) by a reducing agent and H(2)O(2) or O(2) as a cosubstrate. Acts preferentially on crystalline regions of cellulose such as highly crystalline algae cellulose. In Emericella nidulans (strain FGSC A4 / ATCC 38163 / CBS 112.46 / NRRL 194 / M139) (Aspergillus nidulans), this protein is AA9 family lytic polysaccharide monooxygenase G.